A 93-amino-acid polypeptide reads, in one-letter code: Small ribosomal subunit protein uS19 (93 aa).

Belongs to the universal ribosomal protein uS19 family.

In terms of biological role, protein S19 forms a complex with S13 that binds strongly to the 16S ribosomal RNA. The protein is Small ribosomal subunit protein uS19 of Brevibacillus brevis (strain 47 / JCM 6285 / NBRC 100599).